Consider the following 193-residue polypeptide: ATP-dependent protease subunit HslV (193 aa).

Residue Thr12 is part of the active site. Positions 167, 170, and 173 each coordinate Na(+).

This sequence belongs to the peptidase T1B family. HslV subfamily. As to quaternary structure, a double ring-shaped homohexamer of HslV is capped on each side by a ring-shaped HslU homohexamer. The assembly of the HslU/HslV complex is dependent on binding of ATP.

It localises to the cytoplasm. The catalysed reaction is ATP-dependent cleavage of peptide bonds with broad specificity.. Its activity is regulated as follows. Allosterically activated by HslU binding. Protease subunit of a proteasome-like degradation complex believed to be a general protein degrading machinery. This is ATP-dependent protease subunit HslV from Bartonella henselae (strain ATCC 49882 / DSM 28221 / CCUG 30454 / Houston 1) (Rochalimaea henselae).